We begin with the raw amino-acid sequence, 739 residues long: Vascular cell adhesion protein 1 (739 aa).

Positions 1 to 24 are cleaved as a signal peptide; it reads MPVKMVAIFGASTVLWILFAVSQA. 7 consecutive Ig-like C2-type domains span residues 25 to 111, 119 to 212, 223 to 309, 312 to 397, 408 to 506, 514 to 595, and 601 to 682; these read FKIE…IQVD, PEIQ…KERE, PKNT…LIVQ, PFTV…KTIQ, EIEI…QTLY, PTIW…VELI, and KDIQ…RSLT. Topologically, residues 25–698 are extracellular; it reads FKIEISPEYK…ENNKDYFSPE (674 aa). Cystine bridges form between Cys-47-Cys-95, Cys-52-Cys-99, Cys-137-Cys-195, Cys-246-Cys-291, and Cys-335-Cys-383. The N-linked (GlcNAc...) asparagine glycan is linked to Asn-273. 4 N-linked (GlcNAc...) asparagine glycosylation sites follow: Asn-424, Asn-531, Asn-561, and Asn-650. A disulfide bridge links Cys-534 with Cys-579. Residues 699 to 720 form a helical membrane-spanning segment; sequence LLALYFASSLVIPAIGMIIYFA. Residues 721–739 lie on the Cytoplasmic side of the membrane; the sequence is RKANMKGSYSLVEAQKSKV.

As to quaternary structure, binds to ECMV-D capsid proteins and acts as a receptor for this virus. In terms of processing, cleaved by the metalloproteinase ADAM17 to generate the soluble form. Sialoglycoprotein. Post-translationally, ubiquitinated by TRIM65 via 'Lys-48'-linked ubiquitination; leading to proteasomal degradation. In terms of tissue distribution, expressed in aortic endothelial cells, with low expression in the descending thoracic aorta and the outer curvature of the aortic arch, where pulsatory shear stress exists, and high in the inner curvature of the aortic arch, where oscillatory shear stress prevails (at protein level). Expressed on inflamed vascular endothelium, as well as on macrophage-like and dendritic cell types in both normal and inflamed tissue.

The protein resides in the cell membrane. It is found in the secreted. Functionally, cell adhesion glycoprotein predominantly expressed on the surface of endothelial cells that plays an important role in immune surveillance and inflammation. Acts as a major regulator of leukocyte adhesion to the endothelium through interaction with different types of integrins. During inflammatory responses, binds ligands on the surface of activated endothelial cells to initiate the activation of calcium channels and the plasma membrane-associated small GTPase RAC1 leading to leukocyte transendothelial migration. Also serves as a quality-control checkpoint for entry into bone marrow by providing a 'don't-eat-me' stamping in the context of major histocompatibility complex (MHC) class-I presentation. In Rattus norvegicus (Rat), this protein is Vascular cell adhesion protein 1 (Vcam1).